Here is a 193-residue protein sequence, read N- to C-terminus: BH3-interacting domain death agonist (193 aa).

The BH3 motif lies at 87–101 (IAAQLAEIGDQLDKQ).

As to quaternary structure, forms heterodimers either with the pro-apoptotic protein BAX or the anti-apoptotic protein Bcl-2.

It localises to the cytoplasm. Its subcellular location is the mitochondrion outer membrane. In terms of biological role, induces caspases and apoptosis. Counters the protective effect of Bcl-2. This is BH3-interacting domain death agonist (BID) from Gallus gallus (Chicken).